The sequence spans 318 residues: MCRAPMPSTVSEISRIYHQPLPDLLFEAQRVHRAHHDPREVQLCTLSNIKTGLCPENCGYCSQSVHHKSGLAAQELSSLDAVMAEAQAAKAAGSTRFCMGAAWREIKDGPPFERVLEMVRSVAALDMEVCCTLGMVKPHQAERLKQAGLTAYNHNLDTGPGYYPQVVTTRTYKDRLETIRAVGAAGISVCCGGILGMGESLTDRFELLESLGSLDPTPESIPINCLVPVAGTPLADSSPVEPLDLVRMVATTRILFPDAMVRLSAGRLQMSEELQALCFLAGANSIFTGPKLLTTPNPEHSHDQKLLEKLGMEPKTTQ.

Residues H36–D258 form the Radical SAM core domain. Residues C54, C58, and C61 each coordinate [4Fe-4S] cluster. 4 residues coordinate [2Fe-2S] cluster: C98, C130, C190, and R262.

It belongs to the radical SAM superfamily. Biotin synthase family. In terms of assembly, homodimer. [4Fe-4S] cluster serves as cofactor. The cofactor is [2Fe-2S] cluster.

The enzyme catalyses (4R,5S)-dethiobiotin + (sulfur carrier)-SH + 2 reduced [2Fe-2S]-[ferredoxin] + 2 S-adenosyl-L-methionine = (sulfur carrier)-H + biotin + 2 5'-deoxyadenosine + 2 L-methionine + 2 oxidized [2Fe-2S]-[ferredoxin]. It functions in the pathway cofactor biosynthesis; biotin biosynthesis; biotin from 7,8-diaminononanoate: step 2/2. Functionally, catalyzes the conversion of dethiobiotin (DTB) to biotin by the insertion of a sulfur atom into dethiobiotin via a radical-based mechanism. The chain is Biotin synthase from Gloeobacter violaceus (strain ATCC 29082 / PCC 7421).